The sequence spans 146 residues: ATP synthase epsilon chain (146 aa).

It belongs to the ATPase epsilon chain family. In terms of assembly, F-type ATPases have 2 components, CF(1) - the catalytic core - and CF(0) - the membrane proton channel. CF(1) has five subunits: alpha(3), beta(3), gamma(1), delta(1), epsilon(1). CF(0) has three main subunits: a, b and c.

Its subcellular location is the cell membrane. In terms of biological role, produces ATP from ADP in the presence of a proton gradient across the membrane. The polypeptide is ATP synthase epsilon chain (Lactobacillus delbrueckii subsp. bulgaricus (strain ATCC 11842 / DSM 20081 / BCRC 10696 / JCM 1002 / NBRC 13953 / NCIMB 11778 / NCTC 12712 / WDCM 00102 / Lb 14)).